The following is a 67-amino-acid chain: MRVDVYDNNVDQAIRVLKKKMNREGMFREMKKRKFFEKPSERRRRKKAEAIRRLRKKLRRASLAGLG.

This sequence belongs to the bacterial ribosomal protein bS21 family.

This chain is Small ribosomal subunit protein bS21, found in Magnetococcus marinus (strain ATCC BAA-1437 / JCM 17883 / MC-1).